A 397-amino-acid chain; its full sequence is Efflux pump periplasmic linker BepD (397 aa).

An N-terminal signal peptide occupies residues 1 to 26 (MTLNRTIRCFAAGAAFIVFAAQPALA). The stretch at 98 to 139 (APYQAELEKAQAQVAQAEAQYQQSIRDAERAEQLVQQKVQSA) forms a coiled coil.

It belongs to the membrane fusion protein (MFP) (TC 8.A.1) family. In terms of assembly, probably part of a tripartite efflux pump, which is composed of an outer membrane efflux protein, an inner membrane protein and a protein that expands the periplasmic space. Could form a tripartite pump with BepC and BepE.

The protein localises to the periplasm. Its function is as follows. Involved in resistance to several unrelated toxic compounds, such as dyes, detergents and antibiotics. In Brucella suis biovar 1 (strain 1330), this protein is Efflux pump periplasmic linker BepD (bepD).